Here is a 2195-residue protein sequence, read N- to C-terminus: Integrator complex subunit 1 (2195 aa).

A disordered region spans residues 1–86 (MNRAKPTTVR…RPKLSSTPPL (86 aa)). The residue at position 13 (serine 13) is a Phosphoserine. The span at 34–45 (GQASESKTTSTL) shows a compositional bias: polar residues. Lysine 47 carries the N6-acetyllysine modification. The segment covering 62–75 (SASLSGTSALTGLT) has biased composition (low complexity). Threonine 83 carries the post-translational modification Phosphothreonine. Residue serine 87 is modified to Phosphoserine. Residues 267 to 297 (LLQGEGARSGGELGAGSSPHPSLTEEEDSQT) form a disordered region. Residues serine 307 and serine 926 each carry the phosphoserine modification. Residues 923-947 (STASGEEDDEGESREQKAKKRQRQQ) form a disordered region. The helical transmembrane segment at 1165 to 1185 (HILVVHAMVILLTLGPPRSGD) threads the bilayer. Residues 1313 to 1347 (SLPPRRDSTEAPKPESSPEPPPGQGRTRAGTQVPV) are disordered. Residues 1316–1325 (PRRDSTEAPK) show a composition bias toward basic and acidic residues. Phosphoserine is present on residues serine 1320, serine 1328, and serine 1329.

The protein belongs to the Integrator subunit 1 family. In terms of assembly, component of the Integrator complex, composed of core subunits INTS1, INTS2, INTS3, INTS4, INTS5, INTS6, INTS7, INTS8, INTS9/RC74, INTS10, INTS11/CPSF3L, INTS12, INTS13, INTS14 and INTS15. The core complex associates with protein phosphatase 2A subunits PPP2CA and PPP2R1A, to form the Integrator-PP2A (INTAC) complex. Interacts with ESRRB, ESRRB is not a core component of the Integrator complex and this association is a bridge for the interaction with the multiprotein complex Integrator; attracts the transcriptional machinery.

The protein localises to the nucleus. The protein resides in the nucleus membrane. In terms of biological role, component of the integrator complex, a multiprotein complex that terminates RNA polymerase II (Pol II) transcription in the promoter-proximal region of genes. The integrator complex provides a quality checkpoint during transcription elongation by driving premature transcription termination of transcripts that are unfavorably configured for transcriptional elongation: the complex terminates transcription by (1) catalyzing dephosphorylation of the C-terminal domain (CTD) of Pol II subunit POLR2A/RPB1 and SUPT5H/SPT5, (2) degrading the exiting nascent RNA transcript via endonuclease activity and (3) promoting the release of Pol II from bound DNA. The integrator complex is also involved in terminating the synthesis of non-coding Pol II transcripts, such as enhancer RNAs (eRNAs), small nuclear RNAs (snRNAs), telomerase RNAs and long non-coding RNAs (lncRNAs). Within the integrator complex, INTS1 is involved in the post-termination step: INTS1 displaces INTS3 and the SOSS factors, allowing the integrator complex to return to the closed conformation, ready to bind to the paused elongation complex for another termination cycle. Mediates recruitment of cytoplasmic dynein to the nuclear envelope, probably as component of the integrator complex. The protein is Integrator complex subunit 1 of Mus musculus (Mouse).